Here is a 261-residue protein sequence, read N- to C-terminus: MSIEMLRKSNPLIHCMTNVVVTNFTANGLLAVGASPVMAYAKEEVADMAKVANALLLNIGTLSAESIDNMIIAGKAANKAGAPVVLDPVGAGATVFRTESCKRILKEVDVTIVRGNGGEIAALSDQAGTVKGVDGSIDSDPVELAKHAANVLNSAVVVTGEVDVVTDGTGTVCGYNGHPWLTKVVGTGCLSGAIVAAFASLKTDDFLEVIGYGLVAYGVAAEKAYEETKAKGYGSFQTAFLNQLGRLTDEDVKQHGRFERS.

Position 38 (methionine 38) interacts with substrate. Arginine 114 and threonine 159 together coordinate ATP. Residue glycine 186 coordinates substrate.

This sequence belongs to the Thz kinase family. Mg(2+) serves as cofactor.

It catalyses the reaction 5-(2-hydroxyethyl)-4-methylthiazole + ATP = 4-methyl-5-(2-phosphooxyethyl)-thiazole + ADP + H(+). Its pathway is cofactor biosynthesis; thiamine diphosphate biosynthesis; 4-methyl-5-(2-phosphoethyl)-thiazole from 5-(2-hydroxyethyl)-4-methylthiazole: step 1/1. Catalyzes the phosphorylation of the hydroxyl group of 4-methyl-5-beta-hydroxyethylthiazole (THZ). The chain is Hydroxyethylthiazole kinase from Halalkalibacterium halodurans (strain ATCC BAA-125 / DSM 18197 / FERM 7344 / JCM 9153 / C-125) (Bacillus halodurans).